A 163-amino-acid chain; its full sequence is HTH-type transcriptional regulator IscR (163 aa).

An HTH rrf2-type domain is found at 2–131; sequence RLTSKGRYAV…NNITLGELVN (130 aa). The segment at residues 28–51 is a DNA-binding region (H-T-H motif); sequence LADISERQGISLSYLEQLFSRLRK. [2Fe-2S] cluster contacts are provided by Cys92, Cys98, and Cys104.

[2Fe-2S] cluster is required as a cofactor.

Functionally, regulates the transcription of several operons and genes involved in the biogenesis of Fe-S clusters and Fe-S-containing proteins. The polypeptide is HTH-type transcriptional regulator IscR (Klebsiella pneumoniae subsp. pneumoniae (strain ATCC 700721 / MGH 78578)).